The primary structure comprises 578 residues: Phosphoenolpyruvate-protein phosphotransferase (578 aa).

Catalysis depends on His195, which acts as the Tele-phosphohistidine intermediate. Residues Arg302 and Arg338 each coordinate phosphoenolpyruvate. Glu437 and Asp461 together coordinate Mg(2+). Phosphoenolpyruvate is bound by residues 460-461 (ND) and Arg471. Residue Cys508 is the Proton donor of the active site.

Belongs to the PEP-utilizing enzyme family. As to quaternary structure, homodimer. It depends on Mg(2+) as a cofactor.

It localises to the cytoplasm. The catalysed reaction is L-histidyl-[protein] + phosphoenolpyruvate = N(pros)-phospho-L-histidyl-[protein] + pyruvate. Its function is as follows. General (non sugar-specific) component of the phosphoenolpyruvate-dependent sugar phosphotransferase system (sugar PTS). This major carbohydrate active-transport system catalyzes the phosphorylation of incoming sugar substrates concomitantly with their translocation across the cell membrane. Enzyme I transfers the phosphoryl group from phosphoenolpyruvate (PEP) to the phosphoryl carrier protein (HPr). The polypeptide is Phosphoenolpyruvate-protein phosphotransferase (ptsI) (Bacillus sp. (strain S)).